A 303-amino-acid chain; its full sequence is MIKQRTLKNIIRATGVGLHSGEKVYLTLKPAPVDTGIVFVRADLDPVVQIPARAENVGETTMSTTLVNGDVKVDTVEHLLSAMAGLGIDNAYVELSASEVPIMDGSAGPFVFLIQSAGLEEQDAAKKFIRILREVTVEDGDKRATFVPFEGFKVSFEIDFDHPVFRDRTQSASVDFSSTSFVKEVSRARTFGFMSDIEYLRKHNLALGGSVENAIVVDADGVLNEDGLRYEDEFVKHKILDAIGDLYLLGNSLIGEFKGFKSGHALNNQLLRKLIEQTDAWEVVTFEDASTAPISYMRPVAAV.

Zn(2+) contacts are provided by H78, H237, and D241. Catalysis depends on H264, which acts as the Proton donor.

This sequence belongs to the LpxC family. Requires Zn(2+) as cofactor.

It carries out the reaction a UDP-3-O-[(3R)-3-hydroxyacyl]-N-acetyl-alpha-D-glucosamine + H2O = a UDP-3-O-[(3R)-3-hydroxyacyl]-alpha-D-glucosamine + acetate. It functions in the pathway glycolipid biosynthesis; lipid IV(A) biosynthesis; lipid IV(A) from (3R)-3-hydroxytetradecanoyl-[acyl-carrier-protein] and UDP-N-acetyl-alpha-D-glucosamine: step 2/6. Functionally, catalyzes the hydrolysis of UDP-3-O-myristoyl-N-acetylglucosamine to form UDP-3-O-myristoylglucosamine and acetate, the committed step in lipid A biosynthesis. This chain is UDP-3-O-acyl-N-acetylglucosamine deacetylase, found in Pseudomonas fluorescens (strain SBW25).